The primary structure comprises 155 residues: 6,7-dimethyl-8-ribityllumazine synthase (155 aa).

5-amino-6-(D-ribitylamino)uracil contacts are provided by residues phenylalanine 23, 57–59 (AFE), and 81–83 (AVI). 86–87 (ST) serves as a coordination point for (2S)-2-hydroxy-3-oxobutyl phosphate. Residue histidine 89 is the Proton donor of the active site. Phenylalanine 114 is a binding site for 5-amino-6-(D-ribitylamino)uracil. Arginine 128 contributes to the (2S)-2-hydroxy-3-oxobutyl phosphate binding site.

This sequence belongs to the DMRL synthase family.

It catalyses the reaction (2S)-2-hydroxy-3-oxobutyl phosphate + 5-amino-6-(D-ribitylamino)uracil = 6,7-dimethyl-8-(1-D-ribityl)lumazine + phosphate + 2 H2O + H(+). It functions in the pathway cofactor biosynthesis; riboflavin biosynthesis; riboflavin from 2-hydroxy-3-oxobutyl phosphate and 5-amino-6-(D-ribitylamino)uracil: step 1/2. In terms of biological role, catalyzes the formation of 6,7-dimethyl-8-ribityllumazine by condensation of 5-amino-6-(D-ribitylamino)uracil with 3,4-dihydroxy-2-butanone 4-phosphate. This is the penultimate step in the biosynthesis of riboflavin. The polypeptide is 6,7-dimethyl-8-ribityllumazine synthase (Dehalococcoides mccartyi (strain ATCC BAA-2100 / JCM 16839 / KCTC 5957 / BAV1)).